The primary structure comprises 177 residues: Adenine phosphoribosyltransferase (177 aa).

Belongs to the purine/pyrimidine phosphoribosyltransferase family. As to quaternary structure, homodimer.

The protein resides in the cytoplasm. It catalyses the reaction AMP + diphosphate = 5-phospho-alpha-D-ribose 1-diphosphate + adenine. Its pathway is purine metabolism; AMP biosynthesis via salvage pathway; AMP from adenine: step 1/1. Its function is as follows. Catalyzes a salvage reaction resulting in the formation of AMP, that is energically less costly than de novo synthesis. This is Adenine phosphoribosyltransferase from Synechococcus sp. (strain RCC307).